The following is a 122-amino-acid chain: MIQMQSHLRVADNSGARRVMCIKVLGGAGRRYASVGDIIVVSIKEAIPTGRVKKGDVRKAVVVRVAKDINRADGSTIRFDSNAAVLINNNGEPIGTRVFGPVPRELRAKNQVKIANMAPEVL.

Belongs to the universal ribosomal protein uL14 family. In terms of assembly, part of the 50S ribosomal subunit. Forms a cluster with proteins L3 and L19. In the 70S ribosome, L14 and L19 interact and together make contacts with the 16S rRNA in bridges B5 and B8.

Binds to 23S rRNA. Forms part of two intersubunit bridges in the 70S ribosome. This is Large ribosomal subunit protein uL14 from Hyphomonas neptunium (strain ATCC 15444).